We begin with the raw amino-acid sequence, 122 residues long: Large ribosomal subunit protein uL14 (122 aa).

The protein belongs to the universal ribosomal protein uL14 family. As to quaternary structure, part of the 50S ribosomal subunit. Forms a cluster with proteins L3 and L19. In the 70S ribosome, L14 and L19 interact and together make contacts with the 16S rRNA in bridges B5 and B8.

In terms of biological role, binds to 23S rRNA. Forms part of two intersubunit bridges in the 70S ribosome. This is Large ribosomal subunit protein uL14 from Streptococcus suis (strain 05ZYH33).